A 175-amino-acid chain; its full sequence is Ribosome maturation factor RimM (175 aa).

Positions 96–175 constitute a PRC barrel domain; that stretch reads EEDFYWRDLI…LIQVNWEPDF (80 aa).

The protein belongs to the RimM family. As to quaternary structure, binds ribosomal protein uS19.

It localises to the cytoplasm. In terms of biological role, an accessory protein needed during the final step in the assembly of 30S ribosomal subunit, possibly for assembly of the head region. Essential for efficient processing of 16S rRNA. May be needed both before and after RbfA during the maturation of 16S rRNA. It has affinity for free ribosomal 30S subunits but not for 70S ribosomes. The polypeptide is Ribosome maturation factor RimM (Psychromonas ingrahamii (strain DSM 17664 / CCUG 51855 / 37)).